The sequence spans 330 residues: Aspartate--ammonia ligase (330 aa).

The protein belongs to the class-II aminoacyl-tRNA synthetase family. AsnA subfamily.

Its subcellular location is the cytoplasm. It carries out the reaction L-aspartate + NH4(+) + ATP = L-asparagine + AMP + diphosphate + H(+). The protein operates within amino-acid biosynthesis; L-asparagine biosynthesis; L-asparagine from L-aspartate (ammonia route): step 1/1. In Mannheimia succiniciproducens (strain KCTC 0769BP / MBEL55E), this protein is Aspartate--ammonia ligase.